The sequence spans 250 residues: Proteasome subunit alpha type-8 (250 aa).

The protein belongs to the peptidase T1A family. Component of the outer alpha-ring of the 20S proteasome core which is composed of 28 subunits that are arranged in four stacked rings, resulting in a barrel-shaped structure. The catalytic chamber with the active sites is on the inside of the barrel. Interacts with canonical subunits of the spermatoproteasome, including proteasome activators PSME4 (also called PA200) and PSME3 (also called PA28-gamma). Interacts with proteasome-interacting proteins chaperones including CCT6B and CCT2, ubiquitin ligases (TRIP12, NEDD4, TRIM36 and RAD18), and ubiquitin specific proteases such as USP9X, USP34, USP5 and USP47. Interacts with meiotic proteins cyclin dependent kinase CDK1 and the ATPase TRIP13 as well as proteins of the synaptonemal complex SIX6OS1 and SYCE3.

The protein localises to the nucleus. In terms of biological role, component of the spermatoproteasome, a proteasome specifically found in testis that promotes acetylation-dependent degradation of histones, thereby participating actively to the exchange of histones during spermatogenesis. The proteasome is a protein complex that degrades unneeded or damaged proteins by proteolysis, a chemical reaction that breaks peptide bonds. Required for 20S core proteasome assembly, essential for the degradation of meiotic proteins RAD51 and RPA1 at late prophase I and the progression of meiosis I during spermatogenesis. Localizes to the synaptonemal complex, a 'zipper'-like structure that holds homologous chromosome pairs in synapsis during meiotic prophase I. The chain is Proteasome subunit alpha type-8 from Mus musculus (Mouse).